The following is a 419-amino-acid chain: MAPK/MAK/MRK overlapping kinase (419 aa).

Residues 4-285 enclose the Protein kinase domain; that stretch reads YKAIGKIGEG…AHQALQHPYF (282 aa). ATP-binding positions include 10–18 and K33; that span reads IGEGTFSEV. The active-site Proton acceptor is the D128. Disordered regions lie at residues 285–344 and 390–419; these read FQEQ…RGPA and PASK…KGGR. 2 stretches are compositionally biased toward basic and acidic residues: residues 322 to 338 and 393 to 402; these read KEGR…EDRP and KKTDPQKDLK.

The protein belongs to the protein kinase superfamily. CMGC Ser/Thr protein kinase family. CDC2/CDKX subfamily. Mg(2+) is required as a cofactor. Post-translationally, autophosphorylated. Expressed in heart, brain, lung, kidney, and pancreas, and at very low levels in placenta, liver and skeletal muscle. Detected in retina.

It localises to the cytoplasm. Its subcellular location is the cell projection. The protein localises to the cilium. The protein resides in the nucleus. The catalysed reaction is L-seryl-[protein] + ATP = O-phospho-L-seryl-[protein] + ADP + H(+). It catalyses the reaction L-threonyl-[protein] + ATP = O-phospho-L-threonyl-[protein] + ADP + H(+). Its activity is regulated as follows. Phosphorylation appears to increase the enzymatic activity. Functionally, able to phosphorylate several exogenous substrates and to undergo autophosphorylation. Negatively regulates cilium length in a cAMP and mTORC1 signaling-dependent manner. In Homo sapiens (Human), this protein is MAPK/MAK/MRK overlapping kinase (MOK).